Reading from the N-terminus, the 196-residue chain is MSRYRGPRLKKIRRLGALPGLTRKTPKSGSNQKKKFHSGKKEQYRIRLQEKQKLRFHYGLTERQLLRYVHIAGKAKRSTGQVLLQLLEMRLDNILFRLGMASTIPGARQLVNHRHILVNGRIVDIPSFRCKPRDIITTKDNQRSKRLVQNSIASSDPGKLPKHLTVDTLQYKGLVKKILDRKWVGLKVNELLVVEY.

Residues 15–43 (LGALPGLTRKTPKSGSNQKKKFHSGKKEQ) form a disordered region. In terms of domain architecture, S4 RNA-binding spans 89–150 (MRLDNILFRL…NQRSKRLVQN (62 aa)).

It belongs to the universal ribosomal protein uS4 family. In terms of assembly, part of the 30S ribosomal subunit. Contacts protein S5. The interaction surface between S4 and S5 is involved in control of translational fidelity.

The protein localises to the plastid. It localises to the chloroplast. Its function is as follows. One of the primary rRNA binding proteins, it binds directly to 16S rRNA where it nucleates assembly of the body of the 30S subunit. Functionally, with S5 and S12 plays an important role in translational accuracy. In Melinis repens (Red Natal grass), this protein is Small ribosomal subunit protein uS4c (rps4).